The primary structure comprises 623 residues: Putative ABC transporter ATP-binding protein MG014 (623 aa).

The 310-residue stretch at 16–325 folds into the ABC transmembrane type-1 domain; the sequence is LILAPFFTFA…YIVLGFILTS (310 aa). 6 consecutive transmembrane segments (helical) span residues 27 to 47, 81 to 101, 157 to 177, 181 to 201, 266 to 286, and 307 to 327; these read IVID…VFSI, VLAT…LISI, FLRL…FAVT, DMSI…GILN, NIPF…LLVF, and IFAF…TSLT. One can recognise an ABC transporter domain in the interval 365-611; the sequence is LEFRNISFGL…CSLYQKMKES (247 aa). Residue 400-407 coordinates ATP; the sequence is GPTGSGKS.

This sequence belongs to the ABC transporter superfamily.

The protein localises to the cell membrane. This is Putative ABC transporter ATP-binding protein MG014 from Mycoplasma genitalium (strain ATCC 33530 / DSM 19775 / NCTC 10195 / G37) (Mycoplasmoides genitalium).